Reading from the N-terminus, the 101-residue chain is Small ribosomal subunit protein uS14 (101 aa).

This sequence belongs to the universal ribosomal protein uS14 family. In terms of assembly, part of the 30S ribosomal subunit. Contacts proteins S3 and S10.

Binds 16S rRNA, required for the assembly of 30S particles and may also be responsible for determining the conformation of the 16S rRNA at the A site. The chain is Small ribosomal subunit protein uS14 from Brucella anthropi (strain ATCC 49188 / DSM 6882 / CCUG 24695 / JCM 21032 / LMG 3331 / NBRC 15819 / NCTC 12168 / Alc 37) (Ochrobactrum anthropi).